A 340-amino-acid chain; its full sequence is Extracellular matrix protein-binding protein emp (340 aa).

The signal sequence occupies residues 1-26 (MKKKLLVLTMSTLFATQIMNSNHAKA).

It localises to the cell surface. Its function is as follows. Adhesin that binds to the host cell extracellular matrix proteins fibronectin, fibrinogen, collagen, and vitronectin. In Staphylococcus aureus (strain MSSA476), this protein is Extracellular matrix protein-binding protein emp (emp).